Consider the following 224-residue polypeptide: Peroxiredoxin-6 (224 aa).

Residues 5-169 (LLLGDEAPNF…ILRVVDSLQL (165 aa)) form the Thioredoxin domain. The required and sufficient for targeting to lysosomes and lamellar bodies stretch occupies residues 31–40 (DSWGILFSHP). The residue at position 44 (T44) is a Phosphothreonine. C47 acts as the Cysteine sulfenic acid (-SOH) intermediate; for peroxidase activity in catalysis. K63 carries the post-translational modification N6-acetyllysine. Residue Y89 is modified to Phosphotyrosine. Position 93 is a phosphothreonine (T93). D140 functions as the For phospholipase activity in the catalytic mechanism. Phosphothreonine; by MAPK is present on T177. K209 is subject to N6-acetyllysine; alternate. At K209 the chain carries N6-succinyllysine; alternate.

This sequence belongs to the peroxiredoxin family. Prx6 subfamily. As to quaternary structure, homodimer. Interacts with GSTP1; mediates PRDX6 glutathionylation and regeneration. Interacts with APEX1. Interacts with STH. May interact with FAM168B. May interact with HTR2A. Irreversibly inactivated by overoxidation of Cys-47 to sulfinic acid (Cys-SO(2)H) and sulfonic acid (Cys-SO(3)H) forms upon oxidative stress. In terms of processing, phosphorylation at Thr-177 by MAP kinases increases the phospholipase activity of the enzyme. The phosphorylated form exhibits a greater lysophosphatidylcholine acyltransferase activity compared to the non-phosphorylated form. Highly expressed in heart, kidney and liver. Moderate expression in brain and stomach. Very low levels in intestine.

It is found in the cytoplasm. The protein resides in the lysosome. It carries out the reaction a hydroperoxide + 2 glutathione = an alcohol + glutathione disulfide + H2O. It catalyses the reaction a 1,2-diacyl-sn-glycero-3-phosphocholine + H2O = a 1-acyl-sn-glycero-3-phosphocholine + a fatty acid + H(+). The enzyme catalyses a 1-acyl-sn-glycero-3-phosphocholine + an acyl-CoA = a 1,2-diacyl-sn-glycero-3-phosphocholine + CoA. The catalysed reaction is 1-hexadecanoyl-sn-glycero-3-phosphocholine + hexadecanoyl-CoA = 1,2-dihexadecanoyl-sn-glycero-3-phosphocholine + CoA. It carries out the reaction 1,2-dihexadecanoyl-sn-glycero-3-phosphocholine + H2O = 1-hexadecanoyl-sn-glycero-3-phosphocholine + hexadecanoate + H(+). Its activity is regulated as follows. MJ33 or lithium;[(2R)-1-hexadecoxy-3-(2,2,2-trifluoroethoxy)propan-2-yl] methyl phosphate inhibits its phospholipase A2 activity. CI-976 or 2,2-Dimethyl-N-(2,4,6-trimethoxyphenyl)dodecanamide inhibits its lysophosphatidylcholine acyltransferase activity. In terms of biological role, thiol-specific peroxidase that catalyzes the reduction of hydrogen peroxide and organic hydroperoxides to water and alcohols, respectively. Can reduce H(2)O(2) and short chain organic, fatty acid, and phospholipid hydroperoxides. Has phospholipase activity. Can either reduce the oxidized sn-2 fatty acyl group of phospholipids (peroxidase activity) or hydrolyze the sn-2 ester bond of phospholipids (phospholipase activity). These activities are dependent on binding to phospholipids at acidic pH and to oxidized phospholipds at cytosolic pH. Plays a role in cell protection against oxidative stress by detoxifying peroxides and in phospholipid homeostasis. Exhibits acyl-CoA-dependent lysophospholipid acyltransferase which mediates the conversion of lysophosphatidylcholine (1-acyl-sn-glycero-3-phosphocholine or LPC) into phosphatidylcholine (1,2-diacyl-sn-glycero-3-phosphocholine or PC). Shows a clear preference for LPC as the lysophospholipid and for palmitoyl CoA as the fatty acyl substrate. The chain is Peroxiredoxin-6 (Prdx6) from Mus musculus (Mouse).